A 592-amino-acid polypeptide reads, in one-letter code: RNA-binding protein 47 (592 aa).

Over residues 1 to 24 the composition is skewed to low complexity; sequence MTAEDAAAAMSSDSAAGGAASAKA. The interval 1 to 26 is disordered; that stretch reads MTAEDAAAAMSSDSAAGGAASAKAPE. RRM domains are found at residues 73–151, 153–235, and 248–320; these read CEVF…CSVD, CRLF…WAEP, and KILY…LAKP. Arg-397 and Arg-408 each carry asymmetric dimethylarginine; alternate. 2 positions are modified to omega-N-methylarginine; alternate: Arg-397 and Arg-408.

Belongs to the RRM RBM47 family. As to quaternary structure, homodimer. Interacts with A1CF. Interacts with APOBEC1; form an mRNA editing complex. Interacts with RBPMS.

It is found in the nucleus. The protein resides in the cytoplasm. Its function is as follows. Single-stranded RNA-binding protein that functions in a variety of RNA processes, including alternative splicing, RNA stabilization, and RNA editing. Functions as an enzyme-substrate adapter for the cytidine deaminase APOBEC1. With APOBEC1 forms an mRNA editing complex involved into cytidine to uridine editing of a variety of mRNA molecules. Through the binding of their 3'UTR, also stabilizes a variety of mRNAs and regulates the expression of genes such as the interferon alpha/beta receptor and interleukin-10. Also involved in the alternative splicing of several genes including TJP1. Binds the pre-mRNA (U)GCAUG consensus sequences in downstream intronic regions of alternative exons, regulating their exclusion and inclusion into mRNAs. Independently of its RNA-binding activity, could negatively regulate MAVS by promoting its lysosomal degradation. This chain is RNA-binding protein 47, found in Canis lupus familiaris (Dog).